A 199-amino-acid polypeptide reads, in one-letter code: Outer-membrane lipoprotein LolB (199 aa).

The first 28 residues, Met1 to Gly28, serve as a signal peptide directing secretion. Cys29 carries the N-palmitoyl cysteine lipid modification. A lipid anchor (S-diacylglycerol cysteine) is attached at Cys29.

Belongs to the LolB family. In terms of assembly, monomer.

It is found in the cell outer membrane. Its function is as follows. Plays a critical role in the incorporation of lipoproteins in the outer membrane after they are released by the LolA protein. The polypeptide is Outer-membrane lipoprotein LolB (Bordetella parapertussis (strain 12822 / ATCC BAA-587 / NCTC 13253)).